The following is a 90-amino-acid chain: Barrier-to-autointegration factor B (90 aa).

Belongs to the BAF family. As to quaternary structure, homodimer. Interacts with nemp1a and nemp1b.

It localises to the nucleus. The protein localises to the chromosome. Its subcellular location is the nucleus envelope. It is found in the cytoplasm. Its function is as follows. Non-specific DNA-binding protein that plays key roles in mitotic nuclear reassembly, chromatin organization, DNA damage response, gene expression and intrinsic immunity against foreign DNA. Contains two non-specific double-stranded DNA (dsDNA)-binding sites which promote DNA cross-bridging. Plays a key role in nuclear membrane reformation at the end of mitosis by driving formation of a single nucleus in a spindle-independent manner. Transiently cross-bridges anaphase chromosomes via its ability to bridge distant DNA sites, leading to the formation of a dense chromatin network at the chromosome ensemble surface that limits membranes to the surface. Also acts as a negative regulator of innate immune activation by restricting CGAS activity toward self-DNA upon acute loss of nuclear membrane integrity. Outcompetes CGAS for DNA-binding, thereby preventing CGAS activation and subsequent damaging autoinflammatory responses. Also involved in DNA damage response; acts by inhibiting the ADP-ribosyltransferase activity of PARP1. Involved in the recognition of exogenous dsDNA in the cytosol: associates with exogenous dsDNA immediately after its appearance in the cytosol at endosome breakdown and is required to avoid autophagy. The protein is Barrier-to-autointegration factor B (banf1-b) of Xenopus laevis (African clawed frog).